The chain runs to 531 residues: Arginine--tRNA ligase (531 aa).

Residues 113-123 (ANPTGPLHIGH) carry the 'HIGH' region motif.

It belongs to the class-I aminoacyl-tRNA synthetase family. As to quaternary structure, monomer.

The protein resides in the cytoplasm. It carries out the reaction tRNA(Arg) + L-arginine + ATP = L-arginyl-tRNA(Arg) + AMP + diphosphate. This Campylobacter fetus subsp. fetus (strain 82-40) protein is Arginine--tRNA ligase.